A 356-amino-acid polypeptide reads, in one-letter code: MRRELLLEKIETYKAIMPWYVLDYYQSKLAVPYSFTTLYEYLKEYKRFFDWLMDADLTQAPKIADIDLSTLEHLTKKDLEAFVLYLRERPSLNTYSTKEGLSQTTINRTLSALSSLYKYLTEEVENDQGEPYFYRNVMKKVSTKKKKETLASRAENIKQKLFLGDETLAFLDYVDKEYEQKLSNRAKSSFRKNKERDLAIISLLLASGVRLSEAVNLDLKDVNLNMMIIEVIRKGGKRDSVNVAGFAKGYLESYLAVRQRRYKAEKQDLAFFLTEYRGVPNRMDASSIEKMVGKYSEDFKIRVTPHKLRHTLATRLYDATKSQVLVSHQLGHSSTQVTDLYTHIVNDEQKNALDNL.

The Core-binding (CB) domain maps to 16 to 121 (IMPWYVLDYY…ALSSLYKYLT (106 aa)). The 186-residue stretch at 169-354 (AFLDYVDKEY…VNDEQKNALD (186 aa)) folds into the Tyr recombinase domain. Catalysis depends on residues R210, K234, H306, R309, and H332. Residue Y341 is the O-(3'-phospho-DNA)-tyrosine intermediate of the active site.

Belongs to the 'phage' integrase family. XerS subfamily.

Its subcellular location is the cytoplasm. Its activity is regulated as follows. FtsK is required for recombination. In terms of biological role, site-specific tyrosine recombinase, which acts by catalyzing the cutting and rejoining of the recombining DNA molecules. Essential to convert dimers of the bacterial chromosome into monomers to permit their segregation at cell division. This is Tyrosine recombinase XerS from Streptococcus pyogenes serotype M6 (strain ATCC BAA-946 / MGAS10394).